Here is a 248-residue protein sequence, read N- to C-terminus: 3-deoxy-manno-octulosonate cytidylyltransferase (248 aa).

It belongs to the KdsB family.

It localises to the cytoplasm. It catalyses the reaction 3-deoxy-alpha-D-manno-oct-2-ulosonate + CTP = CMP-3-deoxy-beta-D-manno-octulosonate + diphosphate. It functions in the pathway nucleotide-sugar biosynthesis; CMP-3-deoxy-D-manno-octulosonate biosynthesis; CMP-3-deoxy-D-manno-octulosonate from 3-deoxy-D-manno-octulosonate and CTP: step 1/1. It participates in bacterial outer membrane biogenesis; lipopolysaccharide biosynthesis. Its function is as follows. Activates KDO (a required 8-carbon sugar) for incorporation into bacterial lipopolysaccharide in Gram-negative bacteria. This chain is 3-deoxy-manno-octulosonate cytidylyltransferase, found in Citrobacter koseri (strain ATCC BAA-895 / CDC 4225-83 / SGSC4696).